Reading from the N-terminus, the 584-residue chain is Endogenous retrovirus group FC1 Env polyprotein (584 aa).

The first 22 residues, 1–22, serve as a signal peptide directing secretion; the sequence is MARPSPLCLLLLLTLLTPIVPS. The Extracellular portion of the chain corresponds to 23 to 518; it reads NSLLTEPPFR…GWWQSPLTTW (496 aa). 2 N-linked (GlcNAc...) asparagine glycosylation sites follow: N69 and N247. A CXXC motif is present at residues 251–254; it reads CFLC. N-linked (GlcNAc...) asparagine glycans are attached at residues N272, N276, N308, N313, N322, N334, N342, and N346. The segment at 384-404 is fusion peptide; that stretch reads AVFPPLVIGVSLTSSLVASGL. The CKS-17 signature appears at 449-465; the sequence is MQNRRALDLLTADKGGT. C466 and C473 are oxidised to a cystine. The short motif at 466-474 is the CX6CC element; that stretch reads CMFLGEECC. N478 carries an N-linked (GlcNAc...) asparagine glycan. A helical membrane pass occupies residues 519 to 539; sequence IIPFISPILIICLLLLIAPCV. Residues 540–584 lie on the Cytoplasmic side of the membrane; sequence LKFIKNRISEVSRVTVNQMLLHPYSRLPTSEDHYDDALTQQEAAR.

It belongs to the gamma type-C retroviral envelope protein family. HERV class-I F(c)1 env subfamily. In terms of assembly, the surface (SU) and transmembrane (TM) proteins form a heterodimer. SU and TM are attached by noncovalent interactions or by a labile interchain disulfide bond. In terms of processing, specific enzymatic cleavages in vivo yield the mature SU and TM proteins. Post-translationally, the CXXC motif is highly conserved across a broad range of retroviral envelope proteins. It is thought to participate in the formation of a labile disulfide bond possibly with the CX6CC motif present in the transmembrane protein. Low expression in skin, testis and trachea.

It is found in the virion. Its subcellular location is the cell membrane. Functionally, retroviral envelope proteins mediate receptor recognition and membrane fusion during early infection. Endogenous envelope proteins may have kept, lost or modified their original function during evolution. This endogenous envelope protein has lost its original fusogenic properties. Its function is as follows. SU mediates receptor recognition. TM anchors the envelope heterodimer to the viral membrane through one transmembrane domain. The other hydrophobic domain, called fusion peptide, mediates fusion of the viral membrane with the target cell membrane. This Homo sapiens (Human) protein is Endogenous retrovirus group FC1 Env polyprotein (ERVFC1).